Here is a 98-residue protein sequence, read N- to C-terminus: NADH-ubiquinone oxidoreductase chain 4L (98 aa).

3 helical membrane passes run 1–21 (MTLV…GLLM), 26–46 (LMSA…LATI), and 59–79 (MPII…ALLV).

The protein belongs to the complex I subunit 4L family. In terms of assembly, core subunit of respiratory chain NADH dehydrogenase (Complex I) which is composed of 45 different subunits.

The protein localises to the mitochondrion inner membrane. It catalyses the reaction a ubiquinone + NADH + 5 H(+)(in) = a ubiquinol + NAD(+) + 4 H(+)(out). In terms of biological role, core subunit of the mitochondrial membrane respiratory chain NADH dehydrogenase (Complex I) which catalyzes electron transfer from NADH through the respiratory chain, using ubiquinone as an electron acceptor. Part of the enzyme membrane arm which is embedded in the lipid bilayer and involved in proton translocation. This chain is NADH-ubiquinone oxidoreductase chain 4L (MT-ND4L), found in Pontoporia blainvillei (Franciscana).